The following is a 257-amino-acid chain: Electron transfer flavoprotein subunit beta (257 aa).

It belongs to the ETF beta-subunit/FixA family. Heterodimer of an alpha and a beta subunit. FAD serves as cofactor. AMP is required as a cofactor.

The electron transfer flavoprotein serves as a specific electron acceptor for other dehydrogenases. It transfers the electrons to the main respiratory chain via ETF-ubiquinone oxidoreductase (ETF dehydrogenase). In Bacillus subtilis (strain 168), this protein is Electron transfer flavoprotein subunit beta (etfB).